The sequence spans 125 residues: C-X-C motif chemokine 9 (125 aa).

Residues Met1–Gly21 form the signal peptide. Intrachain disulfides connect Cys30–Cys57 and Cys32–Cys73. The interval Gln91–Thr125 is disordered. Over residues Asn93–Thr125 the composition is skewed to basic residues.

This sequence belongs to the intercrine alpha (chemokine CxC) family.

It is found in the secreted. Its function is as follows. Cytokine that affects the growth, movement, or activation state of cells that participate in immune and inflammatory response. Chemotactic for activated T-cells. Binds to CXCR3. In Bos taurus (Bovine), this protein is C-X-C motif chemokine 9 (CXCL9).